Consider the following 360-residue polypeptide: MLRFVRGNLLEAPVEALVNTVNTVGVMGKGVALQFKRAFPDNYQAYVKACERGQVQIGRIFVYDRGPLAQPRYIFNFPTKKHWRHPSRMEYVEEGLKDLVCRIQELRVRSIALPPLGAGNGGLPWPEVKQRIQEALEALEGVEVWVYEPVENPKAHSIVPLKTKPRLTPARAALLKLFGLYGALGEPLGRLEAQKLAYFLQEAGLDLKLDFACKQFGPYAEPLNHVLARLEGHYIQGFGDRTGISQIRLKPQALDEAVLFLADYPKADEAATRAADWVKGFETPYGLELLATVHWAVRHEGARDWASLQKRLQAWNPRKATFPKTHLQVALDALLKRGALRPEEWQDRPPKLPANVAQEA.

The 155-residue stretch at 1–155 folds into the Macro domain; sequence MLRFVRGNLL…VYEPVENPKA (155 aa). Residues 8 to 9, 20 to 22, 31 to 34, and T79 each bind ADP-D-ribose; these read NL, TVN, and VALQ. The Nucleophile role is filled by K80. Residue 117–121 coordinates ADP-D-ribose; sequence GAGNG. The tract at residues 167 to 338 is interaction with DarT; it reads LTPARAALLK…VALDALLKRG (172 aa).

Belongs to the DarG ADP-ribosyl glycohydrolase family. In terms of assembly, interacts (via C-terminus) with cognate toxin DarT; this heterodimeric complex neutralizes the toxic effect of DarT by preventing ssDNA binding to DarT and consequently inactivating the toxin by direct protein-protein interactions.

It carries out the reaction an N-(ADP-alpha-D-ribosyl)-thymidine in DNA + H2O = a thymidine in DNA + ADP-D-ribose. Its function is as follows. Antitoxin component of the hybrid type II/IV toxin-antitoxin (TA) system DarTG, which plays a crucial role in controlling bacterial growth and bacteriophage infection. De-ADP-ribosylates DNA modified on thymidine by its cognate toxin DarT, which neutralizes the activity of cognate toxin DarT. Upon expression in E.coli neutralizes the effect of cognate toxin DarT. Upon expression in M.tuberculosis neutralizes the toxic effects of endogenous DarT. The polypeptide is DNA ADP-ribosyl glycohydrolase (Thermus aquaticus (strain ATCC BAA-2747 / Y51MC23)).